We begin with the raw amino-acid sequence, 399 residues long: LEM domain-containing protein Bocksbeutel (399 aa).

The region spanning 4–48 is the LEM domain; it reads LSYLDTLGNKELLAKCLEHGLPGVPVTDSTRSVIIRRLKAKITGV. Disordered regions lie at residues 49–103, 119–141, and 233–287; these read PLNK…EQSR, SVQT…SYMV, and NSTS…SNLA. Polar residues-rich tracts occupy residues 68–77 and 89–99; these read HGSQVTTPTS and GRTSSNNNKIS. Residues 233–256 show a composition bias toward polar residues; it reads NSTSYEESSTYNPKLSPISPRNTF. Residues 377–397 form a helical membrane-spanning segment; that stretch reads FYLILVVSVMLATMVYVVLTP.

The protein localises to the nucleus inner membrane. It is found in the cytoplasm. The protein resides in the nucleus. Its subcellular location is the nucleoplasm. It localises to the endoplasmic reticulum. Functionally, inner nuclear membrane protein. May have a role in maintaining the structural integrity of the nuclear lamina. During pupal development, plays essential and redundant functions with the other LEM domain proteins; MAN1 and Ote. Also has a redundant but important role with Ote in larval development. The chain is LEM domain-containing protein Bocksbeutel from Drosophila melanogaster (Fruit fly).